The sequence spans 261 residues: Putative imidazole glycerol phosphate synthase subunit hisF2 (261 aa).

Residue Asp-138 is part of the active site.

The protein belongs to the HisA/HisF family. Heterodimer of HisH and HisF.

Its subcellular location is the cytoplasm. The catalysed reaction is 5-[(5-phospho-1-deoxy-D-ribulos-1-ylimino)methylamino]-1-(5-phospho-beta-D-ribosyl)imidazole-4-carboxamide + L-glutamine = D-erythro-1-(imidazol-4-yl)glycerol 3-phosphate + 5-amino-1-(5-phospho-beta-D-ribosyl)imidazole-4-carboxamide + L-glutamate + H(+). It participates in amino-acid biosynthesis; L-histidine biosynthesis; L-histidine from 5-phospho-alpha-D-ribose 1-diphosphate: step 5/9. Functionally, IGPS catalyzes the conversion of PRFAR and glutamine to IGP, AICAR and glutamate. The HisF subunit catalyzes the cyclization activity that produces IGP and AICAR from PRFAR using the ammonia provided by the HisH subunit. This chain is Putative imidazole glycerol phosphate synthase subunit hisF2 (hisF2), found in Prochlorococcus marinus (strain MIT 9313).